A 1584-amino-acid chain; its full sequence is Adhesion G protein-coupled receptor B1 (1584 aa).

Residues 1–30 (MRGQAAAPGPVWILAPLLLLLLLLGRRARA) form the signal peptide. Topologically, residues 31–948 (AAGADAGPGP…ANMEKATLPS (918 aa)) are extracellular. Asn-64 is a glycosylation site (N-linked (GlcNAc...) asparagine). The disordered stretch occupies residues 146-167 (RRQQPPQHDGLRPRAGPPGPTD). A TSP type-1 1 domain is found at 261–315 (TGGWKLWSLWGECTRDCGGGLQTRTRTCLPAPGVEGGGCEGVLEEGRQCNREACG). Cystine bridges form between Cys-273-Cys-309, Cys-277-Cys-314, and Cys-288-Cys-299. The segment at 313–335 (ACGPAGRTSSRSQSLRSTDARRR) is disordered. Low complexity predominate over residues 319 to 329 (RTSSRSQSLRS). 4 consecutive TSP type-1 domains span residues 354 to 407 (DPAA…AVCP), 409 to 462 (HGAW…ALCP), 467 to 520 (DGNW…QQCP), and 522 to 575 (DGKW…QRCP). Disulfide bonds link Cys-366-Cys-400, Cys-370-Cys-406, Cys-381-Cys-390, Cys-421-Cys-456, Cys-425-Cys-461, Cys-436-Cys-446, Cys-479-Cys-514, Cys-483-Cys-519, Cys-494-Cys-504, Cys-534-Cys-569, Cys-538-Cys-574, Cys-549-Cys-559, Cys-581-Cys-616, and Cys-604-Cys-634. N-linked (GlcNAc...) asparagine glycosylation occurs at Asn-401. An N-linked (GlcNAc...) asparagine glycan is attached at Asn-607. Thr-609 is modified (phosphothreonine). Residues Asn-692, Asn-844, Asn-877, and Asn-881 are each glycosylated (N-linked (GlcNAc...) asparagine). The 180-residue stretch at 760–939 (RDAYQVTDNL…AILAQLSADA (180 aa)) folds into the GAIN-B domain. 2 disulfide bridges follow: Cys-884-Cys-921 and Cys-909-Cys-923. Positions 884–939 (CILWDETDVPSSSAPPQLGPWSWRGCRTVPLDALRTRCLCDRLSTFAILAQLSADA) are GPS. The tract at residues 927–943 (STFAILAQLSADANMEK) is N-terminal stalk following vasculostatin-120 cleavage which is not required for signaling activity. The chain crosses the membrane as a helical span at residues 949 to 969 (VTLIVGCGVSSLTLLMLVIIY). Over 970-980 (VSVWRYIRSER) the chain is Cytoplasmic. Residues 981 to 1001 (SVILINFCLSIISSNALILIG) traverse the membrane as a helical segment. The Extracellular portion of the chain corresponds to 1002–1008 (QTQTRNK). A helical transmembrane segment spans residues 1009-1029 (VVCTLVAAFLHFFFLSSFCWV). The Cytoplasmic portion of the chain corresponds to 1030–1052 (LTEAWQSYMAVTGHLRNRLIRKR). A helical membrane pass occupies residues 1053 to 1073 (FLCLGWGLPALVVAISVGFTK). Topologically, residues 1074–1093 (AKGYSTMNYCWLSLEGGLLY) are extracellular. The chain crosses the membrane as a helical span at residues 1094 to 1114 (AFVGPAAAVVLVNMVIGILVF). The Cytoplasmic segment spans residues 1115 to 1136 (NKLVSKDGITDKKLKERAGASL). Residues 1137–1157 (WSSCVVLPLLALTWMSAVLAV) traverse the membrane as a helical segment. Over 1158–1166 (TDRRSALFQ) the chain is Extracellular. A helical membrane pass occupies residues 1167 to 1187 (ILFAVFDSLEGFVIVMVHCIL). At 1188–1584 (RREVQDAVKC…QDIIDLQTEV (397 aa)) the chain is on the cytoplasmic side. Positions 1365–1584 (YSIHIDQMPQ…QDIIDLQTEV (220 aa)) are involved in interaction with MAGI1. 2 disordered regions span residues 1385-1475 (EASL…RRKS) and 1501-1548 (RKLQ…KKEL). Residues 1391–1439 (RSPPSRQPPSGGPPEAPPAQPPPPPPPPPPPPQQPLPPPPNLEPAPPSL) show a composition bias toward pro residues. Polar residues predominate over residues 1453-1469 (TGPSTKNENVATLSVSS). Ser-1469 is modified (phosphoserine). The span at 1501–1522 (RKLQHAAEKDKEVLGPDSKPEK) shows a compositional bias: basic and acidic residues. The indispensable for interaction with MAGI1 stretch occupies residues 1581–1584 (QTEV).

Belongs to the G-protein coupled receptor 2 family. LN-TM7 subfamily. In terms of assembly, interacts with ELMO1 and DOCK. When bound to ELMO1 and DOCK1, acts as a module to promote apoptotic cell engulfment. Interacts with MDM2; the interaction results in inhibition of MDM2-mediated ubiquitination and degradation of DLG4/PSD95. Interacts with PARD3 and TIAM1; the interaction is required for correct dendritic. localization of PARD3 and TIAM1 and for dendritic spine formation. Interacts with MAGI1. Interacts with MAGI3. Interacts with BAIAP2. Interacts with PHYHIP. Interacts with DLG4 (via PDZ domain). Vasculostatin-120: Interacts with CD36. Vasculostatin-120: Interacts with ARRB2. Interacts with BAIAP3; this interaction is direct. Proteolytically cleaved to produce vasculostatin-40 and vasculostatin-120. Vasculostatin-40 is the major form and is produced through proteolytic cleavage by MMP14 between residues 321 and 329 with cleavage likely to be between Ser-326 and Leu-327. Post-translationally, ubiquitinated. In terms of tissue distribution, expressed in brain (at protein level). Expressed on mononuclear phagocytes and monocyte-derived macrophages in the gastric mucosa (at protein level). Expressed in normal pancreatic tissue but not in pancreatic tumor tissue. Reduced or no expression is observed in some glioblastomas.

It is found in the cell membrane. The protein resides in the cell projection. The protein localises to the phagocytic cup. It localises to the cell junction. Its subcellular location is the focal adhesion. It is found in the dendritic spine. The protein resides in the postsynaptic density. The protein localises to the secreted. Phosphatidylserine receptor which enhances the engulfment of apoptotic cells. Also mediates the binding and engulfment of Gram-negative bacteria. Stimulates production of reactive oxygen species by macrophages in response to Gram-negative bacteria, resulting in enhanced microbicidal macrophage activity. In the gastric mucosa, required for recognition and engulfment of apoptotic gastric epithelial cells. Promotes myoblast fusion. Activates the Rho pathway in a G-protein-dependent manner. Inhibits MDM2-mediated ubiquitination and degradation of DLG4/PSD95, promoting DLG4 stability and regulating synaptic plasticity. Required for the formation of dendritic spines by ensuring the correct localization of PARD3 and TIAM1. Potent inhibitor of angiogenesis in brain and may play a significant role as a mediator of the p53/TP53 signal in suppression of glioblastoma. In terms of biological role, inhibits angiogenesis in a CD36-dependent manner. Functionally, inhibits angiogenesis. This is Adhesion G protein-coupled receptor B1 from Homo sapiens (Human).